The following is a 972-amino-acid chain: DNA topoisomerase 1 (972 aa).

Disordered regions lie at residues 1-210 (MSGD…VFVK) and 300-416 (HEQS…RQKA). Residues 11 to 31 (IHIQNGGSCEVVQSNGVTTNG) are compositionally biased toward polar residues. The segment covering 32–50 (HGHHHHHHSSSSSSSKHKS) has biased composition (basic residues). Composition is skewed to basic and acidic residues over residues 51–65 (SSKD…EHKS), 72–86 (SKEH…DRHK), and 93–103 (KHRDKDKERDG). Positions 104-114 (SSNSHRSGSSS) are enriched in low complexity. Over residues 125-138 (SKHKSSSGHHKRSS) the composition is skewed to basic residues. Residues 139-151 (KDKERRDKDKDRG) are compositionally biased toward basic and acidic residues. Low complexity predominate over residues 173–183 (SHKSSSSSSSS). S303 is modified (phosphoserine). Y304 is modified (phosphotyrosine). Acidic residues predominate over residues 316–330 (HDDDADEMNDDEEDV). Interaction with DNA stretches follow at residues 648–649 (KY), 711–716 (RAGNEK), and 807–809 (TAK). The Topo IB-type catalytic domain maps to 655-972 (SSKLKGEKDH…VHMADENYRF (318 aa)). Y930 serves as the catalytic O-(3'-phospho-DNA)-tyrosine intermediate.

It belongs to the type IB topoisomerase family. As to quaternary structure, interacts with Topors.

It localises to the nucleus. Its subcellular location is the cytoplasm. It catalyses the reaction ATP-independent breakage of single-stranded DNA, followed by passage and rejoining.. In terms of biological role, releases the supercoiling and torsional tension of DNA introduced during the DNA replication and transcription by transiently cleaving and rejoining one strand of the DNA duplex. Introduces a single-strand break via transesterification at a target site in duplex DNA. The scissile phosphodiester is attacked by the catalytic tyrosine of the enzyme, resulting in the formation of a DNA-(3'-phosphotyrosyl)-enzyme intermediate and the expulsion of a 5'-OH DNA strand. The free DNA strand then undergoes passage around the unbroken strand thus removing DNA supercoils. Finally, in the religation step, the DNA 5'-OH attacks the covalent intermediate to expel the active-site tyrosine and restore the DNA phosphodiester backbone. This chain is DNA topoisomerase 1, found in Drosophila melanogaster (Fruit fly).